The sequence spans 645 residues: Translation factor GUF1 homolog, mitochondrial (645 aa).

One can recognise a tr-type G domain in the interval 40–215 (DKIRNFGIVA…AIIDRVPAPT (176 aa)). GTP contacts are provided by residues 49-56 (AHVDHGKS), 108-112 (DTPGH), and 162-165 (NKID).

The protein belongs to the TRAFAC class translation factor GTPase superfamily. Classic translation factor GTPase family. LepA subfamily.

Its subcellular location is the mitochondrion inner membrane. The catalysed reaction is GTP + H2O = GDP + phosphate + H(+). Its function is as follows. Promotes mitochondrial protein synthesis. May act as a fidelity factor of the translation reaction, by catalyzing a one-codon backward translocation of tRNAs on improperly translocated ribosomes. Binds to mitochondrial ribosomes in a GTP-dependent manner. The sequence is that of Translation factor GUF1 homolog, mitochondrial from Caenorhabditis elegans.